The primary structure comprises 247 residues: UPF0309 protein GWCH70_1414 (247 aa).

Residues 31 to 214 enclose the SIS domain; the sequence is VSEAIQKGGI…VLMAENGFEP (184 aa).

This sequence belongs to the UPF0309 family.

The protein is UPF0309 protein GWCH70_1414 of Geobacillus sp. (strain WCH70).